The chain runs to 336 residues: D-alanine--D-alanine ligase (336 aa).

Residues 124-330 (KMWFSALGIP…FTEYLSLVIN (207 aa)) form the ATP-grasp domain. 154 to 209 (ALENWGSIFVKAASQGSSVGCYKVDDSSKVADVLKDAFGYAPYVIVEKTIKARELE) is an ATP binding site. Positions 284, 297, and 299 each coordinate Mg(2+).

This sequence belongs to the D-alanine--D-alanine ligase family. Mg(2+) serves as cofactor. Requires Mn(2+) as cofactor.

The protein localises to the cytoplasm. It catalyses the reaction 2 D-alanine + ATP = D-alanyl-D-alanine + ADP + phosphate + H(+). Its pathway is cell wall biogenesis; peptidoglycan biosynthesis. In terms of biological role, cell wall formation. The chain is D-alanine--D-alanine ligase from Shewanella sp. (strain ANA-3).